Consider the following 80-residue polypeptide: Putative membrane protein insertion efficiency factor (80 aa).

Positions 61 to 80 are disordered; sequence KTGKDPVPDHFSLKRNQEGE. Over residues 62-80 the composition is skewed to basic and acidic residues; that stretch reads TGKDPVPDHFSLKRNQEGE.

It belongs to the UPF0161 family.

It localises to the cell membrane. In terms of biological role, could be involved in insertion of integral membrane proteins into the membrane. This Streptococcus pneumoniae serotype 19F (strain G54) protein is Putative membrane protein insertion efficiency factor.